The primary structure comprises 31 residues: Photosystem II reaction center protein T (31 aa).

The helical transmembrane segment at 3-23 threads the bilayer; it reads SFAYILILAFSIGTLFFAIAL.

The protein belongs to the PsbT family. In terms of assembly, PSII is composed of 1 copy each of membrane proteins PsbA, PsbB, PsbC, PsbD, PsbE, PsbF, PsbH, PsbI, PsbJ, PsbK, PsbL, PsbM, PsbT, PsbX, PsbY, PsbZ, Psb30/Ycf12, peripheral proteins PsbO, CyanoQ (PsbQ), PsbU, PsbV and a large number of cofactors. It forms dimeric complexes.

The protein localises to the cellular thylakoid membrane. Found at the monomer-monomer interface of the photosystem II (PS II) dimer, plays a role in assembly and dimerization of PSII. PSII is a light-driven water plastoquinone oxidoreductase, using light energy to abstract electrons from H(2)O, generating a proton gradient subsequently used for ATP formation. The protein is Photosystem II reaction center protein T of Synechococcus sp. (strain RCC307).